The following is a 128-amino-acid chain: Glycine cleavage system H protein (128 aa).

The Lipoyl-binding domain occupies S24–K106. K65 carries the N6-lipoyllysine modification.

This sequence belongs to the GcvH family. In terms of assembly, the glycine cleavage system is composed of four proteins: P, T, L and H. The cofactor is (R)-lipoate.

The glycine cleavage system catalyzes the degradation of glycine. The H protein shuttles the methylamine group of glycine from the P protein to the T protein. The chain is Glycine cleavage system H protein from Chromobacterium violaceum (strain ATCC 12472 / DSM 30191 / JCM 1249 / CCUG 213 / NBRC 12614 / NCIMB 9131 / NCTC 9757 / MK).